The following is a 129-amino-acid chain: Small ribosomal subunit protein uS11 (129 aa).

It belongs to the universal ribosomal protein uS11 family. As to quaternary structure, part of the 30S ribosomal subunit.

Its function is as follows. Located on the platform of the 30S subunit. This is Small ribosomal subunit protein uS11 from Haloarcula marismortui (strain ATCC 43049 / DSM 3752 / JCM 8966 / VKM B-1809) (Halobacterium marismortui).